The sequence spans 603 residues: Glutathione-regulated potassium-efflux system protein KefB (603 aa).

13 consecutive transmembrane segments (helical) span residues 5 to 25 (ALLT…PIAA), 29 to 49 (IGAV…GLGF), 53 to 73 (VEAI…IIGL), 87 to 107 (IFGV…GALY), 115 to 135 (SALI…LQLM), 152 to 172 (VLLF…ILAG), 180 to 202 (WERI…YLVR), 207 to 227 (FIAA…LVLG), 230 to 250 (LFME…GILL), 268 to 288 (GLLL…GILY), 291 to 311 (IVKI…VLYF), 326 to 346 (FAGV…AAAS), and 356 to 376 (PLLL…MQVI). The RCK N-terminal domain occupies 400-521 (EPQVIVVGFG…VRHFSRETFS (122 aa)).

This sequence belongs to the monovalent cation:proton antiporter 2 (CPA2) transporter (TC 2.A.37) family. KefB subfamily. As to quaternary structure, interacts with the regulatory subunit KefG.

The protein resides in the cell inner membrane. In terms of biological role, pore-forming subunit of a potassium efflux system that confers protection against electrophiles. Catalyzes K(+)/H(+) antiport. The chain is Glutathione-regulated potassium-efflux system protein KefB from Pectobacterium atrosepticum (strain SCRI 1043 / ATCC BAA-672) (Erwinia carotovora subsp. atroseptica).